The primary structure comprises 1094 residues: Isoleucine--tRNA ligase (1094 aa).

The short motif at 53-63 (PFANGLPHYGH) is the 'HIGH' region element. The short motif at 624 to 628 (KLSKR) is the 'KMSKS' region element. Residue K627 coordinates ATP.

This sequence belongs to the class-I aminoacyl-tRNA synthetase family. IleS type 2 subfamily. In terms of assembly, monomer. Requires Zn(2+) as cofactor.

The protein localises to the cytoplasm. It carries out the reaction tRNA(Ile) + L-isoleucine + ATP = L-isoleucyl-tRNA(Ile) + AMP + diphosphate. In terms of biological role, catalyzes the attachment of isoleucine to tRNA(Ile). As IleRS can inadvertently accommodate and process structurally similar amino acids such as valine, to avoid such errors it has two additional distinct tRNA(Ile)-dependent editing activities. One activity is designated as 'pretransfer' editing and involves the hydrolysis of activated Val-AMP. The other activity is designated 'posttransfer' editing and involves deacylation of mischarged Val-tRNA(Ile). In Rickettsia felis (strain ATCC VR-1525 / URRWXCal2) (Rickettsia azadi), this protein is Isoleucine--tRNA ligase.